The primary structure comprises 153 residues: Aspartate carbamoyltransferase regulatory chain (153 aa).

Residues C109, C114, C138, and C141 each contribute to the Zn(2+) site.

It belongs to the PyrI family. Contains catalytic and regulatory chains. Zn(2+) serves as cofactor.

Functionally, involved in allosteric regulation of aspartate carbamoyltransferase. This Escherichia coli (strain ATCC 8739 / DSM 1576 / NBRC 3972 / NCIMB 8545 / WDCM 00012 / Crooks) protein is Aspartate carbamoyltransferase regulatory chain.